The sequence spans 400 residues: 1-deoxy-D-xylulose 5-phosphate reductoisomerase (400 aa).

The NADPH site is built by threonine 17, glycine 18, serine 19, isoleucine 20, and asparagine 131. Lysine 132 contributes to the 1-deoxy-D-xylulose 5-phosphate binding site. Residue glutamate 133 coordinates NADPH. A Mn(2+)-binding site is contributed by aspartate 157. Positions 158, 159, 188, and 211 each coordinate 1-deoxy-D-xylulose 5-phosphate. Glutamate 159 is a Mn(2+) binding site. Glycine 217 lines the NADPH pocket. Residues serine 224, asparagine 229, lysine 230, and glutamate 233 each coordinate 1-deoxy-D-xylulose 5-phosphate. Residue glutamate 233 coordinates Mn(2+).

It belongs to the DXR family. Requires Mg(2+) as cofactor. Mn(2+) serves as cofactor.

It carries out the reaction 2-C-methyl-D-erythritol 4-phosphate + NADP(+) = 1-deoxy-D-xylulose 5-phosphate + NADPH + H(+). Its pathway is isoprenoid biosynthesis; isopentenyl diphosphate biosynthesis via DXP pathway; isopentenyl diphosphate from 1-deoxy-D-xylulose 5-phosphate: step 1/6. Functionally, catalyzes the NADPH-dependent rearrangement and reduction of 1-deoxy-D-xylulose-5-phosphate (DXP) to 2-C-methyl-D-erythritol 4-phosphate (MEP). The polypeptide is 1-deoxy-D-xylulose 5-phosphate reductoisomerase (Pseudomonas putida (strain ATCC 47054 / DSM 6125 / CFBP 8728 / NCIMB 11950 / KT2440)).